The chain runs to 438 residues: Citrate synthase (438 aa).

Catalysis depends on residues H306 and D364.

Belongs to the citrate synthase family.

It catalyses the reaction oxaloacetate + acetyl-CoA + H2O = citrate + CoA + H(+). The protein operates within carbohydrate metabolism; tricarboxylic acid cycle; isocitrate from oxaloacetate: step 1/2. The chain is Citrate synthase (gltA) from Bartonella quintana (strain Toulouse) (Rochalimaea quintana).